The chain runs to 418 residues: Histidinol dehydrogenase (418 aa).

Positions 119, 180, and 203 each coordinate NAD(+). The substrate site is built by T226, Q248, and H251. Residues Q248 and H251 each contribute to the Zn(2+) site. Active-site proton acceptor residues include E316 and H317. 4 residues coordinate substrate: H317, D350, E404, and H409. D350 provides a ligand contact to Zn(2+). H409 serves as a coordination point for Zn(2+).

This sequence belongs to the histidinol dehydrogenase family. Zn(2+) serves as cofactor.

The catalysed reaction is L-histidinol + 2 NAD(+) + H2O = L-histidine + 2 NADH + 3 H(+). It functions in the pathway amino-acid biosynthesis; L-histidine biosynthesis; L-histidine from 5-phospho-alpha-D-ribose 1-diphosphate: step 9/9. Its function is as follows. Catalyzes the sequential NAD-dependent oxidations of L-histidinol to L-histidinaldehyde and then to L-histidine. This chain is Histidinol dehydrogenase, found in Staphylococcus aureus (strain MRSA252).